Here is a 913-residue protein sequence, read N- to C-terminus: Calcium-activated chloride channel regulator 1 (913 aa).

An N-terminal signal peptide occupies residues M1 to S21. Residues D46–K199 are metalloprotease domain. Residue H156 participates in Zn(2+) binding. Residue E157 is part of the active site. Zn(2+) contacts are provided by H160 and D167. The VWFA domain occupies I306–L475. N-linked (GlcNAc...) asparagine glycosylation is found at N503, N769, N803, N809, N830, N835, N885, and N889. Positions P866–N885 are disordered.

The protein belongs to the CLCR family. Glycosylated. Post-translationally, the translation product is autoproteolytically cleaved by the metalloprotease domain in the endoplasmic reticulum into a N-terminal and a C-terminal products that remain physically associated with each other. The cleavage is necessary for calcium-activated chloride channel (CaCC) activation activity.

Its subcellular location is the secreted. The protein localises to the extracellular space. Functionally, may be involved in mediating calcium-activated chloride conductance. May play critical roles in goblet cell metaplasia, mucus hypersecretion, cystic fibrosis and AHR. May be involved in the regulation of mucus production and/or secretion by goblet cells. Involved in the regulation of tissue inflammation in the innate immune response. May play a role as a tumor suppressor. Induces MUC5AC. In Macaca mulatta (Rhesus macaque), this protein is Calcium-activated chloride channel regulator 1 (CLCA1).